A 497-amino-acid polypeptide reads, in one-letter code: Protein nucleotidyltransferase YdiU (497 aa).

Positions 88, 90, 91, 110, 122, 123, 173, and 180 each coordinate ATP. The active-site Proton acceptor is Asp-249. Positions 250 and 259 each coordinate Mg(2+). Asp-259 provides a ligand contact to ATP. Residues 477-497 (FARYAEPPEGGGRGYRTFCGT) form a disordered region.

The protein belongs to the SELO family. Mg(2+) is required as a cofactor. The cofactor is Mn(2+).

The enzyme catalyses L-seryl-[protein] + ATP = 3-O-(5'-adenylyl)-L-seryl-[protein] + diphosphate. The catalysed reaction is L-threonyl-[protein] + ATP = 3-O-(5'-adenylyl)-L-threonyl-[protein] + diphosphate. It catalyses the reaction L-tyrosyl-[protein] + ATP = O-(5'-adenylyl)-L-tyrosyl-[protein] + diphosphate. It carries out the reaction L-histidyl-[protein] + UTP = N(tele)-(5'-uridylyl)-L-histidyl-[protein] + diphosphate. The enzyme catalyses L-seryl-[protein] + UTP = O-(5'-uridylyl)-L-seryl-[protein] + diphosphate. The catalysed reaction is L-tyrosyl-[protein] + UTP = O-(5'-uridylyl)-L-tyrosyl-[protein] + diphosphate. In terms of biological role, nucleotidyltransferase involved in the post-translational modification of proteins. It can catalyze the addition of adenosine monophosphate (AMP) or uridine monophosphate (UMP) to a protein, resulting in modifications known as AMPylation and UMPylation. This is Protein nucleotidyltransferase YdiU from Methylorubrum extorquens (strain PA1) (Methylobacterium extorquens).